A 121-amino-acid chain; its full sequence is LOB domain-containing protein 24 (121 aa).

Residues 4–105 (KRCAACKYLR…NELAKTQAEI (102 aa)) form the LOB domain.

Belongs to the LOB domain-containing protein family.

The chain is LOB domain-containing protein 24 (LBD24) from Arabidopsis thaliana (Mouse-ear cress).